The chain runs to 273 residues: Dermonecrotic toxin SdSicTox-betaIF1 (273 aa).

Histidine 5 is a catalytic residue. Residues glutamate 25 and aspartate 27 each coordinate Mg(2+). The active-site Nucleophile is the histidine 41. Cystine bridges form between cysteine 45–cysteine 51 and cysteine 47–cysteine 189.

Belongs to the arthropod phospholipase D family. Class II subfamily. Mg(2+) is required as a cofactor. Expressed by the venom gland.

The protein localises to the secreted. It catalyses the reaction an N-(acyl)-sphingosylphosphocholine = an N-(acyl)-sphingosyl-1,3-cyclic phosphate + choline. The catalysed reaction is an N-(acyl)-sphingosylphosphoethanolamine = an N-(acyl)-sphingosyl-1,3-cyclic phosphate + ethanolamine. It carries out the reaction a 1-acyl-sn-glycero-3-phosphocholine = a 1-acyl-sn-glycero-2,3-cyclic phosphate + choline. The enzyme catalyses a 1-acyl-sn-glycero-3-phosphoethanolamine = a 1-acyl-sn-glycero-2,3-cyclic phosphate + ethanolamine. Its function is as follows. Dermonecrotic toxins cleave the phosphodiester linkage between the phosphate and headgroup of certain phospholipids (sphingolipid and lysolipid substrates), forming an alcohol (often choline) and a cyclic phosphate. This toxin acts on sphingomyelin (SM). It may also act on ceramide phosphoethanolamine (CPE), lysophosphatidylcholine (LPC) and lysophosphatidylethanolamine (LPE), but not on lysophosphatidylserine (LPS), and lysophosphatidylglycerol (LPG). It acts by transphosphatidylation, releasing exclusively cyclic phosphate products as second products. Induces dermonecrosis, hemolysis, increased vascular permeability, edema, inflammatory response, and platelet aggregation. The protein is Dermonecrotic toxin SdSicTox-betaIF1 of Sicarius cf. damarensis (strain GJB-2008) (Six-eyed sand spider).